The chain runs to 468 residues: ATP synthase subunit beta (468 aa).

155–162 (GGAGVGKT) provides a ligand contact to ATP.

This sequence belongs to the ATPase alpha/beta chains family. F-type ATPases have 2 components, CF(1) - the catalytic core - and CF(0) - the membrane proton channel. CF(1) has five subunits: alpha(3), beta(3), gamma(1), delta(1), epsilon(1). CF(0) has three main subunits: a(1), b(2) and c(9-12). The alpha and beta chains form an alternating ring which encloses part of the gamma chain. CF(1) is attached to CF(0) by a central stalk formed by the gamma and epsilon chains, while a peripheral stalk is formed by the delta and b chains.

The protein localises to the cell membrane. It carries out the reaction ATP + H2O + 4 H(+)(in) = ADP + phosphate + 5 H(+)(out). Functionally, produces ATP from ADP in the presence of a proton gradient across the membrane. The catalytic sites are hosted primarily by the beta subunits. This is ATP synthase subunit beta from Bacillus cereus (strain B4264).